Here is a 2003-residue protein sequence, read N- to C-terminus: Neurogenic locus notch homolog protein 4 (2003 aa).

Positions 1 to 23 are cleaved as a signal peptide; the sequence is MQPPSLLLLLLLLLLLCVSVVRP. EGF-like domains are found at residues 24 to 63, 64 to 115, 118 to 155, and 156 to 192; these read RGLLCGSFPEPCANGGTCLSLSLGQGTCQCAPGFLGETCQ, FPDP…ERCQ, LEDPCPPSFCSKRGRCHIQASGRPQCSCMPGWTGEQCQ, and LRDFCSANPCVNGGVCLATYPQIQCHCPPGFEGHACE. Residues 24–1447 are Extracellular-facing; that stretch reads RGLLCGSFPE…TAPPANQLPW (1424 aa). Cystine bridges form between Cys-28-Cys-41, Cys-35-Cys-51, Cys-53-Cys-62, Cys-68-Cys-80, Cys-74-Cys-103, Cys-105-Cys-114, Cys-122-Cys-133, Cys-127-Cys-143, Cys-145-Cys-154, Cys-160-Cys-171, Cys-165-Cys-180, Cys-182-Cys-191, Cys-198-Cys-211, Cys-205-Cys-220, Cys-222-Cys-231, Cys-238-Cys-249, Cys-243-Cys-262, Cys-264-Cys-273, Cys-280-Cys-291, Cys-285-Cys-300, Cys-302-Cys-311, Cys-318-Cys-332, Cys-326-Cys-341, Cys-343-Cys-352, Cys-359-Cys-370, Cys-364-Cys-379, Cys-381-Cys-390, Cys-396-Cys-407, Cys-401-Cys-418, Cys-420-Cys-429, Cys-436-Cys-452, Cys-446-Cys-461, Cys-463-Cys-472, Cys-479-Cys-490, Cys-484-Cys-499, Cys-501-Cys-510, Cys-517-Cys-528, Cys-522-Cys-537, Cys-539-Cys-548, Cys-555-Cys-566, Cys-560-Cys-575, Cys-577-Cys-586, Cys-593-Cys-604, Cys-598-Cys-613, Cys-615-Cys-624, Cys-629-Cys-640, Cys-634-Cys-649, and Cys-651-Cys-658. Positions 194–232 constitute an EGF-like 5; calcium-binding domain; sequence DVNECFQDPGPCPKGTSCHNTLGSFQCLCPVGQEGPRCE. The EGF-like 6 domain maps to 234–274; it reads RAGPCPPRGCSNGGTCQLMPEKDSTFHLCLCPPGFIGPDCE. In terms of domain architecture, EGF-like 7; calcium-binding spans 276-312; it reads NPDNCVSHQCQNGGTCQDGLDTYTCLCPETWTGWDCS. One can recognise an EGF-like 8; calcium-binding domain in the interval 314 to 353; it reads DVDECETQGPPHCRNGGTCQNSAGSFHCVCVSGWGGTSCE. An EGF-like 9; calcium-binding domain is found at 355–391; that stretch reads NLDDCIAATCAPGSTCIDRVGSFSCLCPPGRTGLLCH. The region spanning 392-430 is the EGF-like 10 domain; that stretch reads LEDMCLSQPCHGDAQCSTNPLTGSTLCLCQPGYSGPTCH. One can recognise an EGF-like 11; calcium-binding domain in the interval 432 to 473; it reads DLDECLMAQQGPSPCEHGGSCLNTPGSFNCLCPPGYTGSRCE. One can recognise an EGF-like 12; calcium-binding domain in the interval 475–511; the sequence is DHNECLSQPCHPGSTCLDLLATFHCLCPPGLEGQLCE. Residues 513 to 549 form the EGF-like 13; calcium-binding domain; the sequence is ETNECASAPCLNHADCHDLLNGFQCICLPGFSGTRCE. The EGF-like 14; calcium-binding domain occupies 551–587; it reads DIDECRSSPCANGGQCQDQPGAFHCKCLPGFEGPRCQ. The EGF-like 15; calcium-binding domain occupies 589–625; sequence EVDECLSDPCPVGASCLDLPGAFFCLCPSGFTGQLCE. 14 EGF-like domains span residues 626 to 659, 661 to 689, 691 to 727, 729 to 765, 767 to 803, 806 to 842, 844 to 880, 882 to 928, 930 to 966, 968 to 1004, 1006 to 1044, 1046 to 1085, 1087 to 1126, and 1130 to 1171; these read VPLCAPNLCQPKQICKDQKDKANCLCPDGSPGCA, PEDNCTCHHGHCQRSSCVCDVGWTGPECE, ELGGCISAPCAHGGTCYPQPSGYNCTCPTGYTGPTCS, EMTACHSGPCLNGGSCNPSPGGYYCTCPPSHTGPQCQ, STDYCVSAPCFNGGTCVNRPGTFSCLCAMGFQGPRCE, LRPSCADSPCRNRATCQDSPQGPRCLCPTGYTGGSCQ, LMDLCAQKPCPRNSHCLQTGPSFHCLCLQGWTGPLCN, PLSS…SLCQ, HVNPCESRPCQNGATCMAQPSGYLCQCAPGYDGQNCS, ELDACQSQPCHNHGTCTPKPGGFHCACPPGFVGLRCE, DVDECLDQPCHPTGTAACHSLANAFYCQCLPGHTGQWCE, EIDPCHSQPCFHGGTCEATAGSPLGFICHCPKGFEGPTCS, RAPSCGFHHCHHGGLCLPSPKPGFPPRCACLSGYGGPDCL, and APKG…PRCQ. N-linked (GlcNAc...) asparagine glycosylation occurs at Asn-664. 47 cysteine pairs are disulfide-bonded: Cys-665–Cys-672, Cys-667–Cys-677, Cys-679–Cys-688, Cys-695–Cys-706, Cys-700–Cys-715, Cys-717–Cys-726, Cys-733–Cys-744, Cys-738–Cys-753, Cys-755–Cys-764, Cys-771–Cys-782, Cys-776–Cys-791, Cys-793–Cys-802, Cys-810–Cys-821, Cys-815–Cys-830, Cys-832–Cys-841, Cys-848–Cys-859, Cys-853–Cys-868, Cys-870–Cys-879, Cys-886–Cys-907, Cys-901–Cys-916, Cys-918–Cys-927, Cys-934–Cys-945, Cys-939–Cys-954, Cys-956–Cys-965, Cys-972–Cys-983, Cys-977–Cys-992, Cys-994–Cys-1003, Cys-1010–Cys-1023, Cys-1015–Cys-1032, Cys-1034–Cys-1043, Cys-1050–Cys-1061, Cys-1055–Cys-1073, Cys-1075–Cys-1084, Cys-1091–Cys-1102, Cys-1096–Cys-1114, Cys-1116–Cys-1125, Cys-1134–Cys-1146, Cys-1140–Cys-1159, Cys-1161–Cys-1170, Cys-1178–Cys-1191, Cys-1187–Cys-1203, Cys-1214–Cys-1238, Cys-1220–Cys-1233, Cys-1229–Cys-1245, Cys-1251–Cys-1277, Cys-1259–Cys-1272, and Cys-1268–Cys-1284. N-linked (GlcNAc...) asparagine glycosylation is present at Asn-714. The N-linked (GlcNAc...) asparagine glycan is linked to Asn-964. Residue Asn-1143 is glycosylated (N-linked (GlcNAc...) asparagine). 3 LNR repeats span residues 1170–1213, 1214–1250, and 1251–1294; these read CQKP…PWKG, CPSHSRCWLLFRDGQCHPQCDSEECLFDGYDCETPPA, and CTPA…PEWG. Residues 1347–1371 form a disordered region; the sequence is AEEKLGGTRDPTYQERAAPQTQPLG. A helical membrane pass occupies residues 1448-1468; that stretch reads PVLCSPVAGVILLALGALLVL. The Cytoplasmic segment spans residues 1469–2003; it reads QLIRRRRREH…PINQGGEGKK (535 aa). The disordered stretch occupies residues 1485-1508; the sequence is PGFTRRPRTQSAPHRRRPPLGEDS. Residues 1489 to 1502 show a composition bias toward basic residues; it reads RRPRTQSAPHRRRP. 5 ANK repeats span residues 1633–1665, 1666–1698, 1700–1732, 1733–1765, and 1766–1798; these read TGETPLHLAARFSRPTAARRLLEAGANPNQPDR, AGRTPLHAAVAADAREVCQLLLRSRQTAVDART, DGTTPLMLAARLAVEDLVEELIAAQADVGARDK, WGKTALHWAAAVNNARAARSLLQAGADKDAQDN, and REQTPLFLAAREGAVEVAQLLLGLGAARELRDQ. Disordered regions lie at residues 1900–1927 and 1968–2003; these read LSGVGAGGGPTPRGRRFSAGMRGPRPNP and PPPCLTPSPERGSPQLDCGPPALQEMPINQGGEGKK.

Belongs to the NOTCH family. In terms of assembly, heterodimer of a C-terminal fragment N(TM) and a N-terminal fragment N(EC) which are probably linked by disulfide bonds. Interacts with MAML1, MAML2 and MAML3 which act as transcriptional coactivators for NOTCH4. As to quaternary structure, (Microbial infection) Interacts with Epstein-Barr virus (EBV) RK-BARF0. Synthesized in the endoplasmic reticulum as an inactive form which is proteolytically cleaved by a furin-like convertase in the trans-Golgi network before it reaches the plasma membrane to yield an active, ligand-accessible form. Cleavage results in a C-terminal fragment N(TM) and a N-terminal fragment N(EC). Following ligand binding, it is cleaved by TNF-alpha converting enzyme (TACE) to yield a membrane-associated intermediate fragment called notch extracellular truncation (NEXT). This fragment is then cleaved by presenilin dependent gamma-secretase to release a notch-derived peptide containing the intracellular domain (NICD) from the membrane. In terms of processing, phosphorylated. In terms of tissue distribution, highly expressed in the heart, moderately in the lung and placenta and at low levels in the liver, skeletal muscle, kidney, pancreas, spleen, lymph node, thymus, bone marrow and fetal liver. No expression was seen in adult brain or peripheral blood leukocytes.

Its subcellular location is the cell membrane. The protein resides in the nucleus. In terms of biological role, functions as a receptor for membrane-bound ligands Jagged1, Jagged2 and Delta1 to regulate cell-fate determination. Upon ligand activation through the released notch intracellular domain (NICD) it forms a transcriptional activator complex with RBPJ/RBPSUH and activates genes of the enhancer of split locus. Affects the implementation of differentiation, proliferation and apoptotic programs. May regulate branching morphogenesis in the developing vascular system. This Homo sapiens (Human) protein is Neurogenic locus notch homolog protein 4.